Reading from the N-terminus, the 197-residue chain is Cytochrome c biogenesis ATP-binding export protein CcmA (197 aa).

The region spanning 1 to 196 (MSMLSLHQLQ…VIKSAQILQL (196 aa)) is the ABC transporter domain. 35 to 42 (GANGSGKS) lines the ATP pocket.

The protein belongs to the ABC transporter superfamily. CcmA exporter (TC 3.A.1.107) family. In terms of assembly, the complex is composed of two ATP-binding proteins (CcmA) and two transmembrane proteins (CcmB).

The protein resides in the cell inner membrane. It carries out the reaction heme b(in) + ATP + H2O = heme b(out) + ADP + phosphate + H(+). In terms of biological role, part of the ABC transporter complex CcmAB involved in the biogenesis of c-type cytochromes; once thought to export heme, this seems not to be the case, but its exact role is uncertain. Responsible for energy coupling to the transport system. This Rickettsia typhi (strain ATCC VR-144 / Wilmington) protein is Cytochrome c biogenesis ATP-binding export protein CcmA.